A 225-amino-acid chain; its full sequence is tRNA (guanine-N(1)-)-methyltransferase (225 aa).

S-adenosyl-L-methionine contacts are provided by residues Gly110 and 130 to 135 (VGDYVL).

Belongs to the RNA methyltransferase TrmD family. Homodimer.

It localises to the cytoplasm. The enzyme catalyses guanosine(37) in tRNA + S-adenosyl-L-methionine = N(1)-methylguanosine(37) in tRNA + S-adenosyl-L-homocysteine + H(+). Specifically methylates guanosine-37 in various tRNAs. The sequence is that of tRNA (guanine-N(1)-)-methyltransferase from Neorickettsia sennetsu (strain ATCC VR-367 / Miyayama) (Ehrlichia sennetsu).